A 148-amino-acid polypeptide reads, in one-letter code: Insoluble matrix shell protein 1 (148 aa).

Residues 105-128 (KSGRTEARNTDDSGDPIIDPRTAD) are disordered.

As to expression, component of the acid-insoluble organic matrix of the calcified shell.

It localises to the secreted. This chain is Insoluble matrix shell protein 1, found in Ruditapes philippinarum (Japanese carpet shell).